The chain runs to 316 residues: Ribose-phosphate pyrophosphokinase (316 aa).

ATP-binding positions include 37-39 (DGE) and 96-97 (RQ). 2 residues coordinate Mg(2+): histidine 130 and aspartate 171. The active site involves lysine 194. 2 residues coordinate D-ribose 5-phosphate: arginine 196 and aspartate 221.

It belongs to the ribose-phosphate pyrophosphokinase family. Class I subfamily. In terms of assembly, homohexamer. Requires Mg(2+) as cofactor.

Its subcellular location is the cytoplasm. The catalysed reaction is D-ribose 5-phosphate + ATP = 5-phospho-alpha-D-ribose 1-diphosphate + AMP + H(+). The protein operates within metabolic intermediate biosynthesis; 5-phospho-alpha-D-ribose 1-diphosphate biosynthesis; 5-phospho-alpha-D-ribose 1-diphosphate from D-ribose 5-phosphate (route I): step 1/1. Its function is as follows. Involved in the biosynthesis of the central metabolite phospho-alpha-D-ribosyl-1-pyrophosphate (PRPP) via the transfer of pyrophosphoryl group from ATP to 1-hydroxyl of ribose-5-phosphate (Rib-5-P). In Rhodopirellula baltica (strain DSM 10527 / NCIMB 13988 / SH1), this protein is Ribose-phosphate pyrophosphokinase.